Reading from the N-terminus, the 499-residue chain is NAD(P)H-quinone oxidoreductase chain 4, chloroplastic (499 aa).

14 helical membrane-spanning segments follow: residues 4–24 (FPWLTIIVLFPISAGLVIPFL), 31–51 (IIRWYTLGVCLLEFLLITYIF), 87–107 (IGLILLTGFITTLATLAAWPV), 113–133 (LFYFLMLAMYSGQIGLFASQD), 134–154 (ILLFFFMWELELLPVYLLLAM), 167–187 (FILYTAAGSLFILIGGLIMAF), 211–231 (IIIYLSFLIAYAVKLPIIPFH), 242–262 (HYSTCMLLAGILLKMGAYGLI), 274–294 (SFFAPWLVIVGAIQIVYAALT), 310–330 (VSHMGFVLIGIGSITNLGLNG), 331–351 (AILQMISHGLIGASLFFLAGI), 385–405 (SLALPGMSGFIAELMIFLGVI), 416–436 (IIIIIIQGIGIILTPIYLLSM), and 462–482 (IFILICLFFPIISIGIYPNFV).

It belongs to the complex I subunit 4 family.

It is found in the plastid. It localises to the chloroplast thylakoid membrane. The catalysed reaction is a plastoquinone + NADH + (n+1) H(+)(in) = a plastoquinol + NAD(+) + n H(+)(out). It catalyses the reaction a plastoquinone + NADPH + (n+1) H(+)(in) = a plastoquinol + NADP(+) + n H(+)(out). The chain is NAD(P)H-quinone oxidoreductase chain 4, chloroplastic (ndhD) from Marchantia polymorpha (Common liverwort).